A 164-amino-acid chain; its full sequence is uncharacterized protein (164 aa).

Positions 1–17 are enriched in polar residues; sequence MNSRVPATQSWFSSHLP. The segment at 1-48 is disordered; it reads MNSRVPATQSWFSSHLPTTEPDLEPATAAEGSTTETATLSPETTSFND. Positions 24–45 are enriched in low complexity; it reads EPATAAEGSTTETATLSPETTS. A helical transmembrane segment spans residues 64-84; the sequence is MLLSFGIITVIGLAVAMVLYI. Residues 106–130 adopt a coiled-coil conformation; the sequence is TEEQDELEQELLEHGRDAASMQAAA.

The protein resides in the membrane. This is an uncharacterized protein from Mus musculus (Mouse).